We begin with the raw amino-acid sequence, 314 residues long: Acetaldehyde dehydrogenase 3 (314 aa).

The Acyl-thioester intermediate role is filled by C132. Residues S163–N171 and N291 each bind NAD(+).

It belongs to the acetaldehyde dehydrogenase family.

It carries out the reaction acetaldehyde + NAD(+) + CoA = acetyl-CoA + NADH + H(+). The protein is Acetaldehyde dehydrogenase 3 of Dechloromonas aromatica (strain RCB).